A 252-amino-acid polypeptide reads, in one-letter code: 5'-nucleotidase SurE (252 aa).

4 residues coordinate a divalent metal cation: aspartate 8, aspartate 9, serine 39, and asparagine 91.

This sequence belongs to the SurE nucleotidase family. It depends on a divalent metal cation as a cofactor.

The protein localises to the cytoplasm. It carries out the reaction a ribonucleoside 5'-phosphate + H2O = a ribonucleoside + phosphate. Nucleotidase that shows phosphatase activity on nucleoside 5'-monophosphates. The sequence is that of 5'-nucleotidase SurE from Paraburkholderia xenovorans (strain LB400).